Reading from the N-terminus, the 367-residue chain is Quinolinate synthase (367 aa).

Residues H45 and S62 each coordinate iminosuccinate. C109 provides a ligand contact to [4Fe-4S] cluster. Residues 140–142 (YVN) and S161 each bind iminosuccinate. C229 is a binding site for [4Fe-4S] cluster. Residues 255-257 (HPE) and T272 each bind iminosuccinate. [4Fe-4S] cluster is bound at residue C319.

Belongs to the quinolinate synthase family. Type 3 subfamily. [4Fe-4S] cluster is required as a cofactor.

The protein localises to the cytoplasm. It catalyses the reaction iminosuccinate + dihydroxyacetone phosphate = quinolinate + phosphate + 2 H2O + H(+). The protein operates within cofactor biosynthesis; NAD(+) biosynthesis; quinolinate from iminoaspartate: step 1/1. Its function is as follows. Catalyzes the condensation of iminoaspartate with dihydroxyacetone phosphate to form quinolinate. The protein is Quinolinate synthase of Lysinibacillus sphaericus (strain C3-41).